A 244-amino-acid chain; its full sequence is Triosephosphate isomerase (244 aa).

8–10 (NWK) is a substrate binding site. His-93 serves as the catalytic Electrophile. The active-site Proton acceptor is the Glu-161. Substrate is bound by residues Gly-167, Ser-206, and 227–228 (GG).

The protein belongs to the triosephosphate isomerase family. In terms of assembly, homodimer.

It localises to the cytoplasm. It carries out the reaction D-glyceraldehyde 3-phosphate = dihydroxyacetone phosphate. Its pathway is carbohydrate biosynthesis; gluconeogenesis. It participates in carbohydrate degradation; glycolysis; D-glyceraldehyde 3-phosphate from glycerone phosphate: step 1/1. Involved in the gluconeogenesis. Catalyzes stereospecifically the conversion of dihydroxyacetone phosphate (DHAP) to D-glyceraldehyde-3-phosphate (G3P). This Deinococcus radiodurans (strain ATCC 13939 / DSM 20539 / JCM 16871 / CCUG 27074 / LMG 4051 / NBRC 15346 / NCIMB 9279 / VKM B-1422 / R1) protein is Triosephosphate isomerase.